The primary structure comprises 316 residues: MSKRKVAIIGSGNIGTDLMIKILRHDQHLEMAVMVGIDPQSDGLARARRMGVATTHEGVIGLMNMPEFADIDIVFDATSAGAHVKNDAALREAKPDIRLIDLTPAAIGPYCVPVVNLEENVDQLNVNMVTCGGQATIPMVAAVSRVVRVHYAEIIASIASKSAGPGTRANIDEFTETTSRAIEVVGGAAKGKAIIVLNPAEPPLMMRDTVYVLSDEASQDDIEASINEMAEAVQAYVPGYRLKQRVQFEVIPQDKPVNLPGVGQFSGLKTAVWLEVEGAAHYLPAYAGNLDIMTSSALATAEKMAQSLARKAGEAA.

11–14 provides a ligand contact to NAD(+); the sequence is SGNI. The active-site Acyl-thioester intermediate is Cys131. Residues 162–170 and Asn289 each bind NAD(+); that span reads SAGPGTRAN.

Belongs to the acetaldehyde dehydrogenase family. As to quaternary structure, interacts with MhpE.

It carries out the reaction acetaldehyde + NAD(+) + CoA = acetyl-CoA + NADH + H(+). It participates in aromatic compound metabolism; 3-phenylpropanoate degradation. Catalyzes the conversion of acetaldehyde to acetyl-CoA, using NAD(+) and coenzyme A. Is the final enzyme in the meta-cleavage pathway for the degradation of aromatic compounds. The sequence is that of Acetaldehyde dehydrogenase from Escherichia coli O157:H7.